The sequence spans 1149 residues: Potassium channel subfamily U member 1 (1149 aa).

Over Met1–Gln24 the chain is Extracellular. The helical transmembrane segment at Ala25 to Phe45 threads the bilayer. At Arg46–Val101 the chain is on the cytoplasmic side. A helical transmembrane segment spans residues Gly102–Ile122. Topologically, residues Asn123–Thr138 are extracellular. Residues Ile139–Ala159 traverse the membrane as a helical segment. The Cytoplasmic segment spans residues Ala160 to Lys163. The chain crosses the membrane as a helical span at residues Ile164 to Ile184. The Extracellular portion of the chain corresponds to Ser185–Leu188. A helical; Voltage-sensor transmembrane segment spans residues Lys189–Ile209. The Cytoplasmic portion of the chain corresponds to Leu210–Lys226. The chain crosses the membrane as a helical span at residues Leu227–Asn247. Topologically, residues Ser248–Gln259 are extracellular. Residues Asn260–Val282 constitute an intramembrane region (pore-forming). A Selectivity for potassium motif is present at residues Thr276 to Phe279. Topologically, residues Val283 to Thr291 are extracellular. Residues Phe292–Val312 form a helical membrane-spanning segment. The Cytoplasmic segment spans residues Glu313–Leu1149. 2 consecutive RCK N-terminal domains span residues Lys331–Ile473 and Arg713–Leu884. Disordered regions lie at residues Gln828–Ser854 and Ser1118–Leu1149. Residues Asp830 to Ser840 show a composition bias toward low complexity. Over residues Asn1125–Asp1135 the composition is skewed to basic and acidic residues.

This sequence belongs to the potassium channel family. Calcium-activated (TC 1.A.1.3) subfamily. KCa5.1/KCNU1 sub-subfamily. As to quaternary structure, homotetramer; which constitutes the activated potassium channel. Interacts with LRRC52; this interaction changes channel gating properties, such as shifting gating to more negative potentials at a given pH. As to expression, testis-specific.

It is found in the cell membrane. The protein resides in the cell projection. It localises to the cilium. Its subcellular location is the flagellum membrane. The enzyme catalyses K(+)(in) = K(+)(out). With respect to regulation, regulated by changes in cytosolic pH; activated by alkalization. Activated by intracellular Ca(2+). Despite strong sequence similarity, human KCNU1 channels are significantly more sensitive to activation by internal Ca(2+) and less pH-sensitive than mouse KCNU1. VU0546110 acts as a selective inhibitor. The auxiliary subunit LRRC52 shifts the activation of KCNU1 to more negative potentials at a given pH. In terms of biological role, testis-specific potassium channel activated by both intracellular pH and membrane voltage that mediates export of K(+). Represents the primary spermatozoan K(+) current. The channel underlies a pH-triggered membrane hyperpolarization during the process of sperm capacitation, as sperm encounter the alkaline environment near the ovum in the female reproductive tract, thereby playing an essential for male fertility. The protein is Potassium channel subfamily U member 1 of Homo sapiens (Human).